A 275-amino-acid chain; its full sequence is Formamidopyrimidine-DNA glycosylase (275 aa).

Pro2 serves as the catalytic Schiff-base intermediate with DNA. Glu3 acts as the Proton donor in catalysis. The Proton donor; for beta-elimination activity role is filled by Lys60. Residues His93 and Arg112 each contribute to the DNA site. The FPG-type zinc-finger motif lies at 240–274 (FVYGRKDEPCKKCGSPIEKTVVGGRGTHFCIKCQK). The Proton donor; for delta-elimination activity role is filled by Arg264.

Belongs to the FPG family. As to quaternary structure, monomer. Zn(2+) serves as cofactor.

It carries out the reaction Hydrolysis of DNA containing ring-opened 7-methylguanine residues, releasing 2,6-diamino-4-hydroxy-5-(N-methyl)formamidopyrimidine.. The enzyme catalyses 2'-deoxyribonucleotide-(2'-deoxyribose 5'-phosphate)-2'-deoxyribonucleotide-DNA = a 3'-end 2'-deoxyribonucleotide-(2,3-dehydro-2,3-deoxyribose 5'-phosphate)-DNA + a 5'-end 5'-phospho-2'-deoxyribonucleoside-DNA + H(+). Functionally, involved in base excision repair of DNA damaged by oxidation or by mutagenic agents. Acts as a DNA glycosylase that recognizes and removes damaged bases. Has a preference for oxidized purines, such as 7,8-dihydro-8-oxoguanine (8-oxoG). Has AP (apurinic/apyrimidinic) lyase activity and introduces nicks in the DNA strand. Cleaves the DNA backbone by beta-delta elimination to generate a single-strand break at the site of the removed base with both 3'- and 5'-phosphates. The chain is Formamidopyrimidine-DNA glycosylase from Bacillus licheniformis (strain ATCC 14580 / DSM 13 / JCM 2505 / CCUG 7422 / NBRC 12200 / NCIMB 9375 / NCTC 10341 / NRRL NRS-1264 / Gibson 46).